The sequence spans 575 residues: Acetylcholine receptor subunit beta-type acr-2 (575 aa).

The N-terminal stretch at methionine 1–cysteine 20 is a signal peptide. Topologically, residues asparagine 21–valine 270 are extracellular. The segment at phenylalanine 31–glycine 57 is disordered. Positions aspartate 38 to serine 50 are enriched in low complexity. 4 N-linked (GlcNAc...) asparagine glycosylation sites follow: asparagine 41, asparagine 42, asparagine 80, and asparagine 131. The cysteines at positions 185 and 199 are disulfide-linked. The next 3 membrane-spanning stretches (helical) occupy residues isoleucine 271–valine 291, leucine 299–proline 319, and leucine 331–isoleucine 351. Residues tyrosine 352–arginine 527 are Cytoplasmic-facing. A helical transmembrane segment spans residues leucine 528–alanine 548.

It belongs to the ligand-gated ion channel (TC 1.A.9) family. Acetylcholine receptor (TC 1.A.9.1) subfamily. Component of nicotinic acetylcholine receptor. In cholinergic motoneurons, composed of 2 non-alpha subunits acr-2 and acr-3, and 3 alpha subunits unc-38, unc-63 and acr-12. As to expression, specifically expressed in cholinergic ventral cord motoneurons of the VA, VB, DA and DB classes but not AS and VC classes. Expressed in PVQ and DVC neurons in the tail.

The protein resides in the postsynaptic cell membrane. The protein localises to the cell membrane. In terms of biological role, non-alpha subunit of nicotinic acetylcholine receptor (nAChR). Acts in cholinergic motoneurons to regulate presynaptic neurotransmitter release, thereby ensuring normal level of excitation of cholinergic motoneurons during locomotion. The polypeptide is Acetylcholine receptor subunit beta-type acr-2 (acr-2) (Caenorhabditis elegans).